Consider the following 296-residue polypeptide: NAD kinase (296 aa).

Residue D72 is the Proton acceptor of the active site. NAD(+) is bound by residues D72–G73, N146–D147, R157, K174, D176, T187–S192, and Q247.

This sequence belongs to the NAD kinase family. It depends on a divalent metal cation as a cofactor.

The protein localises to the cytoplasm. It catalyses the reaction NAD(+) + ATP = ADP + NADP(+) + H(+). In terms of biological role, involved in the regulation of the intracellular balance of NAD and NADP, and is a key enzyme in the biosynthesis of NADP. Catalyzes specifically the phosphorylation on 2'-hydroxyl of the adenosine moiety of NAD to yield NADP. This is NAD kinase from Pseudomonas syringae pv. syringae (strain B728a).